Consider the following 375-residue polypeptide: 23S rRNA (uracil(747)-C(5))-methyltransferase RlmC (375 aa).

[4Fe-4S] cluster-binding residues include Cys3, Cys11, Cys14, and Cys87. S-adenosyl-L-methionine contacts are provided by Gln212, Phe241, Glu262, and Asn307. Cys334 serves as the catalytic Nucleophile.

The protein belongs to the class I-like SAM-binding methyltransferase superfamily. RNA M5U methyltransferase family. RlmC subfamily.

The catalysed reaction is uridine(747) in 23S rRNA + S-adenosyl-L-methionine = 5-methyluridine(747) in 23S rRNA + S-adenosyl-L-homocysteine + H(+). In terms of biological role, catalyzes the formation of 5-methyl-uridine at position 747 (m5U747) in 23S rRNA. In Escherichia coli O6:H1 (strain CFT073 / ATCC 700928 / UPEC), this protein is 23S rRNA (uracil(747)-C(5))-methyltransferase RlmC.